A 411-amino-acid polypeptide reads, in one-letter code: 6-hydroxytryprostatin B O-methyltransferase (411 aa).

Aspartate 270 is an S-adenosyl-L-methionine binding site. The Proton acceptor role is filled by histidine 313.

Belongs to the class I-like SAM-binding methyltransferase superfamily. Cation-independent O-methyltransferase family. In terms of assembly, homodimer.

The enzyme catalyses 6-hydroxytryprostatin B + S-adenosyl-L-methionine = tryprostatin A + S-adenosyl-L-homocysteine + H(+). Its pathway is alkaloid biosynthesis. Its function is as follows. 6-hydroxytryprostatin B O-methyltransferase; part of the gene cluster that mediates the biosynthesis of fumitremorgins, indole alkaloids that carry not only intriguing chemical structures, but also interesting biological and pharmacological activities. The biosynthesis of fumitremorgin-type alkaloids begins by condensation of the two amino acids L-tryptophan and L-proline to brevianamide F, catalyzed by the non-ribosomal peptide synthetase ftmPS/ftmA. Brevianamide F is then prenylated by the prenyltransferase ftmPT1/ftmB in the presence of dimethylallyl diphosphate, resulting in the formation of tryprostatin B. The three cytochrome P450 monooxygenases, ftmP450-1/ftmC, ftmP450-2/ftmE and ftmP450-3/FtmG, are responsible for the conversion of tryprostatin B to 6-hydroxytryprostatin B, tryprostatin A to fumitremorgin C and fumitremorgin C to 12,13-dihydroxyfumitremorgin C, respectively. The putative methyltransferase ftmMT/ftmD is expected for the conversion of 6-hydroxytryprostatin B to tryprostatin A. FtmPT2/FtmH catalyzes the prenylation of 12,13-dihydroxyfumitre-morgin C in the presence of dimethylallyl diphosphate, resulting in the formation of fumitremorgin B. Fumitremorgin B is further converted to verruculogen by ftmOx1/ftmF via the insertion of an endoperoxide bond between the two prenyl moieties. Finally, verruculogen is further converted to fumitremorgin A by the verruculogen prenyltransferase ftmPT3. The sequence is that of 6-hydroxytryprostatin B O-methyltransferase from Neosartorya fischeri (strain ATCC 1020 / DSM 3700 / CBS 544.65 / FGSC A1164 / JCM 1740 / NRRL 181 / WB 181) (Aspergillus fischerianus).